A 596-amino-acid polypeptide reads, in one-letter code: Elongation factor 4 (596 aa).

One can recognise a tr-type G domain in the interval 2 to 184 (SHIRNFSIIA…RLVHTIPAPE (183 aa)). GTP is bound by residues 14–19 (DHGKST) and 131–134 (NKMD).

It belongs to the TRAFAC class translation factor GTPase superfamily. Classic translation factor GTPase family. LepA subfamily.

The protein localises to the cell inner membrane. It carries out the reaction GTP + H2O = GDP + phosphate + H(+). Its function is as follows. Required for accurate and efficient protein synthesis under certain stress conditions. May act as a fidelity factor of the translation reaction, by catalyzing a one-codon backward translocation of tRNAs on improperly translocated ribosomes. Back-translocation proceeds from a post-translocation (POST) complex to a pre-translocation (PRE) complex, thus giving elongation factor G a second chance to translocate the tRNAs correctly. Binds to ribosomes in a GTP-dependent manner. In Pseudomonas putida (strain GB-1), this protein is Elongation factor 4.